The chain runs to 49 residues: Fungus-induced-related protein 16 (49 aa).

This chain is Fungus-induced-related protein 16 (fipr-16), found in Caenorhabditis elegans.